A 304-amino-acid polypeptide reads, in one-letter code: Glycosyltransferase AglE (304 aa).

It belongs to the glycosyltransferase 2 family.

The protein resides in the cell membrane. The protein operates within cell surface structure biogenesis; S-layer biogenesis. Its function is as follows. Involved in the assembly of a N-linked pentasaccharide that decorates the S-layer glycoprotein and flagellins. Catalyzes the addition to the dolichol phosphate carrier of the hexuronic acid found at position 4 of the pentasaccharide. The protein is Glycosyltransferase AglE (aglE) of Haloferax volcanii (strain ATCC 29605 / DSM 3757 / JCM 8879 / NBRC 14742 / NCIMB 2012 / VKM B-1768 / DS2) (Halobacterium volcanii).